Here is a 110-residue protein sequence, read N- to C-terminus: UPF0060 membrane protein MT2717 (110 aa).

4 helical membrane passes run 6–26 (ILLFVLAAVAEIGGAWLVWQG), 32–52 (GWLWAGLGVIALGVYGFFATL), 61–81 (VLAAYGGVFVAGSLAWGMALD), and 90–110 (VIGALGCMAGVAVIMYAPRGH).

The protein belongs to the UPF0060 family.

The protein localises to the cell membrane. The sequence is that of UPF0060 membrane protein MT2717 from Mycobacterium tuberculosis (strain CDC 1551 / Oshkosh).